Consider the following 600-residue polypeptide: Autophagy-related protein 22-2 (600 aa).

The segment at 1–30 (MAFASPPASPPDEDGQARAPRYPGEDTTPT) is disordered. 4 consecutive transmembrane segments (helical) span residues 41–61 (YGIAAEVFAVCGVGSFLPLTL), 117–137 (SFAMYTFSLAVLVQALTLISF), 149–168 (TLLVTFGFIGSATSMLFVFI), and 186–206 (CLGSSFVVLNSFLPVLVASDP). A disordered region spans residues 234-257 (SFDGDEPTHRPPTGLGLGGATGTS). The next 4 membrane-spanning stretches (helical) occupy residues 271 to 291 (GVGLGYCAAVFVQILSILLLF), 304 to 324 (TLPLRFVLLLVGIWWFSFTMV), 378 to 398 (VIVFLVAWFLLSDAMATVSGT), and 414 to 434 (VALLSITATLSGMAGAFLWPI). N444 carries N-linked (GlcNAc...) asparagine glycosylation. A run of 4 helical transmembrane segments spans residues 449-469 (VCIALFELIPLYGMLAYIPLF), 484-506 (YPLAIVHGVVSGGLSSYCRSFFG), 526-546 (KGSSFIGPAIVGVLIDATGQV), and 549-569 (GFFFIAVLIVLPIPLVWMVDA).

The protein belongs to the ATG22 family.

It is found in the vacuole membrane. Vacuolar effluxer which mediate the efflux of amino acids resulting from autophagic degradation. The release of autophagic amino acids allows the maintenance of protein synthesis and viability during nitrogen starvation. The chain is Autophagy-related protein 22-2 (atg22-2) from Aspergillus niger (strain ATCC MYA-4892 / CBS 513.88 / FGSC A1513).